A 322-amino-acid chain; its full sequence is Mas-related G-protein coupled receptor member B5 (322 aa).

The Extracellular segment spans residues 1-34; it reads MGLTTPAWNINNTVVNGSNNTEHFSCVSKFNTLN. N-linked (GlcNAc...) asparagine glycans are attached at residues Asn11, Asn16, and Asn19. Residues 35–55 form a helical membrane-spanning segment; it reads FLTVIIAMFGLAGNAIVLWLL. The Cytoplasmic segment spans residues 56-70; that stretch reads AFHLPRNAFSVYVCN. A helical transmembrane segment spans residues 71–91; the sequence is LACADFLQLCTQILGSLECFL. Topologically, residues 92–98 are extracellular; it reads QLNRRHT. The helical transmembrane segment at 99-119 threads the bilayer; that stretch reads FFLTVVFMFAYLAGLCMIAAI. Residues 120–147 are Cytoplasmic-facing; it reads SVERSLSVMWPIWYHCQRPRHTSSIMCA. The chain crosses the membrane as a helical span at residues 148–168; it reads LLWAFCLLLNFLLGEGCGLLF. Over 169–172 the chain is Extracellular; it reads SDPK. The helical transmembrane segment at 173–193 threads the bilayer; that stretch reads YYFCITCALITTALIILLTVV. Residues 194 to 216 are Cytoplasmic-facing; the sequence is PSVSSLALLVKMICGSHRIPVTR. A helical membrane pass occupies residues 217 to 237; it reads FYVTIALTLVVFIFLGLPFGI. At 238–260 the chain is on the extracellular side; the sequence is YSSFLIMFKEFQSIFSYHVLEVT. A helical transmembrane segment spans residues 261 to 281; it reads IFLSCVNSCANPIIYFLVGSI. Residues 282–322 are Cytoplasmic-facing; it reads RQHRLQWQSLKLLLQRAMQDTPEEDSGERVPSQRSGELESV. Positions 302 to 322 are disordered; it reads TPEEDSGERVPSQRSGELESV.

The protein belongs to the G-protein coupled receptor 1 family. Mas subfamily.

It is found in the membrane. Functionally, orphan receptor. Probably involved in the function of nociceptive neurons. May regulate nociceptor function and/or development, including the sensation or modulation of pain. The polypeptide is Mas-related G-protein coupled receptor member B5 (Mrgprb5) (Mus musculus (Mouse)).